Here is a 153-residue protein sequence, read N- to C-terminus: 6,7-dimethyl-8-ribityllumazine synthase (153 aa).

Residues Phe-22, 56 to 58 (AFE), and 80 to 82 (TVI) each bind 5-amino-6-(D-ribitylamino)uracil. (2S)-2-hydroxy-3-oxobutyl phosphate is bound at residue 85–86 (ST). His-88 functions as the Proton donor in the catalytic mechanism. Position 113 (Phe-113) interacts with 5-amino-6-(D-ribitylamino)uracil. Residue Arg-127 participates in (2S)-2-hydroxy-3-oxobutyl phosphate binding.

The protein belongs to the DMRL synthase family. As to quaternary structure, forms an icosahedral capsid composed of 60 subunits, arranged as a dodecamer of pentamers.

It catalyses the reaction (2S)-2-hydroxy-3-oxobutyl phosphate + 5-amino-6-(D-ribitylamino)uracil = 6,7-dimethyl-8-(1-D-ribityl)lumazine + phosphate + 2 H2O + H(+). Its pathway is cofactor biosynthesis; riboflavin biosynthesis; riboflavin from 2-hydroxy-3-oxobutyl phosphate and 5-amino-6-(D-ribitylamino)uracil: step 1/2. Its function is as follows. Catalyzes the formation of 6,7-dimethyl-8-ribityllumazine by condensation of 5-amino-6-(D-ribitylamino)uracil with 3,4-dihydroxy-2-butanone 4-phosphate. This is the penultimate step in the biosynthesis of riboflavin. The polypeptide is 6,7-dimethyl-8-ribityllumazine synthase (Haemophilus ducreyi (strain 35000HP / ATCC 700724)).